Reading from the N-terminus, the 130-residue chain is Small ribosomal subunit protein uS9 (130 aa).

It belongs to the universal ribosomal protein uS9 family.

The chain is Small ribosomal subunit protein uS9 from Vibrio cholerae serotype O1 (strain ATCC 39541 / Classical Ogawa 395 / O395).